The following is a 265-amino-acid chain: MIKWPWKAQETPQQDNPPWEDALAIPILHSLTTEEQTRLVALAERFLQQKRIVPLQGFELDSLKSARIALLFCLPVLELGIEWLDGFHEVLIYPAPFVVDDEWEDDIGLVHNQRIVQSGQSWQQGPIVLNWVDIRDSFDASGFNLIIHEVAHKLDMRNGDRASGIPLIPLREVAGWEHDLHAAMENIQEEIDLVGETASSIDAYAATDPAECFAVLSEYFFSAPELFAPRFPSLWQRFCQFYGQNPLLRLRNSPNNDASPTTNVH.

His-111, His-148, His-152, and Glu-211 together coordinate Zn(2+).

This sequence belongs to the MtfA family. As to quaternary structure, interacts with Mlc. The cofactor is Zn(2+).

It is found in the cytoplasm. Functionally, involved in the modulation of the activity of the glucose-phosphotransferase system (glucose-PTS). Interacts with the transcriptional repressor Mlc, preventing its interaction with DNA and leading to the modulation of expression of genes regulated by Mlc, including ptsG, which encodes the PTS system glucose-specific EIICB component. In terms of biological role, shows zinc-dependent metallopeptidase activity. This Escherichia fergusonii (strain ATCC 35469 / DSM 13698 / CCUG 18766 / IAM 14443 / JCM 21226 / LMG 7866 / NBRC 102419 / NCTC 12128 / CDC 0568-73) protein is Mlc titration factor A.